The primary structure comprises 227 residues: Urease accessory protein UreF (227 aa).

This sequence belongs to the UreF family. In terms of assembly, ureD, UreF and UreG form a complex that acts as a GTP-hydrolysis-dependent molecular chaperone, activating the urease apoprotein by helping to assemble the nickel containing metallocenter of UreC. The UreE protein probably delivers the nickel.

Its subcellular location is the cytoplasm. Required for maturation of urease via the functional incorporation of the urease nickel metallocenter. The polypeptide is Urease accessory protein UreF (Blochmanniella floridana).